The chain runs to 117 residues: Glycine cleavage system H-like protein (117 aa).

A Lipoyl-binding domain is found at 21 to 103; the sequence is IVKLGLSSQM…ESEGWFVVLQ (83 aa). Lys-62 bears the N6-lipoyllysine mark.

Belongs to the GcvH family. It depends on (R)-lipoate as a cofactor.

The polypeptide is Glycine cleavage system H-like protein (Chlamydia trachomatis serovar L2 (strain ATCC VR-902B / DSM 19102 / 434/Bu)).